The following is a 232-amino-acid chain: Large ribosomal subunit protein uL1 (232 aa).

This sequence belongs to the universal ribosomal protein uL1 family. In terms of assembly, part of the 50S ribosomal subunit.

In terms of biological role, binds directly to 23S rRNA. The L1 stalk is quite mobile in the ribosome, and is involved in E site tRNA release. Protein L1 is also a translational repressor protein, it controls the translation of the L11 operon by binding to its mRNA. This is Large ribosomal subunit protein uL1 from Chlamydia pneumoniae (Chlamydophila pneumoniae).